We begin with the raw amino-acid sequence, 220 residues long: Histone deacetylase complex subunit SAP30 (220 aa).

Residues 1-129 (MNGFTPEEMS…QSVRNRRKRK (129 aa)) are interaction with NCOR1. T5 is modified (phosphothreonine). The Atypical zinc-finger motif lies at 67 to 115 (CCLREDGERCGRAAGNASFSKRIQKSISQKKVKIELDKSARHLYICDYH). K87 is covalently cross-linked (Glycyl lysine isopeptide (Lys-Gly) (interchain with G-Cter in SUMO2)). The tract at residues 123 to 143 (RNRRKRKGSDDDGGDSPVQDI) is disordered. The interaction with SIN3A stretch occupies residues 130–220 (GSDDDGGDSP…SDLKADSGVH (91 aa)). 2 positions are modified to phosphoserine: S131 and S138. T145 is modified (phosphothreonine). Glycyl lysine isopeptide (Lys-Gly) (interchain with G-Cter in SUMO2) cross-links involve residues K194 and K214.

This sequence belongs to the SAP30 family. Component of the histone deacetylase complex that includes at least SIN3A, HDAC1 and HDAC2. Found in a complex composed of at least SINHCAF, SIN3A, HDAC1, SAP30, RBBP4, OGT and TET1. Interacts with HDAC1. Interacts with SIN3A, SIN3B, HDAC2, RBBP4 and NCOR1. Interacts directly with SAMSN1. Interacts with HCFC1. Interacts with SAP30BP.

It is found in the nucleus. Functionally, involved in the functional recruitment of the Sin3-histone deacetylase complex (HDAC) to a specific subset of N-CoR corepressor complexes. Capable of transcription repression by N-CoR. Active in deacetylating core histone octamers (when in a complex) but inactive in deacetylating nucleosomal histones. The chain is Histone deacetylase complex subunit SAP30 from Mus musculus (Mouse).